Reading from the N-terminus, the 112-residue chain is Nitrogen regulatory protein P-II (112 aa).

O-UMP-tyrosine is present on Tyr-51.

It belongs to the P(II) protein family. Homotrimer.

Functionally, in nitrogen-limiting conditions, when the ratio of Gln to 2-ketoglutarate decreases, P-II is uridylylated to P-II-UMP. P-II-UMP allows the deadenylation of glutamine synthetase (GS), thus activating the enzyme. Conversely, in nitrogen excess P-II is deuridylated and promotes the adenylation of GS. P-II indirectly controls the transcription of the GS gene (glnA). P-II prevents NR-II-catalyzed conversion of NR-I to NR-I-phosphate, the transcriptional activator of glnA. When P-II is uridylylated to P-II-UMP, these events are reversed. This chain is Nitrogen regulatory protein P-II (glnB), found in Mesorhizobium japonicum (strain LMG 29417 / CECT 9101 / MAFF 303099) (Mesorhizobium loti (strain MAFF 303099)).